We begin with the raw amino-acid sequence, 1053 residues long: 3-hydroxy-3-methylglutaryl-coenzyme A reductase (1053 aa).

The Cytoplasmic portion of the chain corresponds to Met1–Arg8. Residues Tyr9 to Leu29 form a helical membrane-spanning segment. At Glu30–Thr203 the chain is on the lumenal side. N-linked (GlcNAc...) asparagine glycosylation is present at Asn137. Residues Glu204–Leu224 form a helical membrane-spanning segment. One can recognise an SSD domain in the interval Glu204 to Leu365. At Lys225 to Lys232 the chain is on the cytoplasmic side. A helical membrane pass occupies residues Phe233–Leu253. The Lumenal portion of the chain corresponds to Val254 to Gly258. Residues Val259–Leu279 form a helical membrane-spanning segment. Topologically, residues Asp280–His320 are cytoplasmic. The next 2 membrane-spanning stretches (helical) occupy residues Phe321 to Phe341 and Phe342 to Ile362. The Cytoplasmic portion of the chain corresponds to Leu363 to Gly417. A helical membrane pass occupies residues Thr418–Phe438. Topologically, residues Lys439 to Ser526 are lumenal. N-linked (GlcNAc...) asparagine glycosylation occurs at Asn518. A helical membrane pass occupies residues Phe527–Leu547. Residues Asn548–Arg1053 are Cytoplasmic-facing. The active-site Charge relay system is Glu712. Ser718–Lys724 provides a ligand contact to CoA. Residues Ser779–Phe781 and Asp806–Ser814 each bind NADP(+). Lys846 serves as the catalytic Charge relay system. Val875 to Lys877 contributes to the CoA binding site. Asp922 serves as the catalytic Charge relay system. Ser1017–His1018 lines the CoA pocket. Residue His1018 is the Proton donor of the active site. Position 1022 to 1023 (Asn1022 to Arg1023) interacts with NADP(+). Ser1024 carries the phosphoserine modification. Position 1028 is a phosphothreonine (Thr1028). Residues Thr1028 to Arg1053 are disordered.

This sequence belongs to the HMG-CoA reductase family.

The protein localises to the endoplasmic reticulum membrane. It localises to the nucleus envelope. It carries out the reaction (R)-mevalonate + 2 NADP(+) + CoA = (3S)-3-hydroxy-3-methylglutaryl-CoA + 2 NADPH + 2 H(+). It participates in metabolic intermediate biosynthesis; (R)-mevalonate biosynthesis; (R)-mevalonate from acetyl-CoA: step 3/3. Its function is as follows. Part of the first module of ergosterol biosynthesis pathway that includes the early steps of the pathway, conserved across all eukaryotes, and which results in the formation of mevalonate from acetyl-coenzyme A (acetyl-CoA). Hmg1 catalyzes the reduction of hydroxymethylglutaryl-CoA (HMG-CoA) to mevalonate. The first module starts with the action of the cytosolic acetyl-CoA acetyltransferase eg10 that catalyzes the formation of acetoacetyl-CoA. The hydroxymethylglutaryl-CoA synthases erg13 then condenses acetyl-CoA with acetoacetyl-CoA to form HMG-CoA. The rate-limiting step of the early module is the reduction to mevalonate by the 3-hydroxy-3-methylglutaryl-coenzyme A (HMG-CoA) reductases hcs1. The polypeptide is 3-hydroxy-3-methylglutaryl-coenzyme A reductase (Schizosaccharomyces pombe (strain 972 / ATCC 24843) (Fission yeast)).